Consider the following 193-residue polypeptide: MTEYLLLLIGTVLVNNFVLVKFLGLCPFMGVSKKLETAIGMGLATTFVLTLASVCAYLVESYVLRPLGIEYLRTMSFILVIAVVVQFTEMVVHKTSPTLYRLLGIFLPLITTNCAVLGVALLNINENHNFIQSIIYGFGAAVGFSLVLILFASMRERIHVADVPAPFKGASIAMITAGLMSLAFMGFTGLVKL.

6 helical membrane passes run 5-25 (LLLL…FLGL), 39-59 (IGMG…AYLV), 67-87 (LGIE…VVQF), 102-122 (LLGI…VALL), 134-154 (IIYG…FASM), and 171-191 (SIAM…TGLV).

It belongs to the NqrDE/RnfAE family. As to quaternary structure, the complex is composed of six subunits: RnfA, RnfB, RnfC, RnfD, RnfE and RnfG.

Its subcellular location is the cell inner membrane. Functionally, part of a membrane-bound complex that couples electron transfer with translocation of ions across the membrane. The sequence is that of Ion-translocating oxidoreductase complex subunit A from Vibrio cholerae serotype O1 (strain ATCC 39315 / El Tor Inaba N16961).